Here is a 473-residue protein sequence, read N- to C-terminus: Photosystem II CP43 reaction center protein (473 aa).

The propeptide occupies 1–14 (MKTLYSLRRFYPVE). N-acetylthreonine is present on T15. Phosphothreonine is present on T15. Helical transmembrane passes span 69–93 (LFEV…PHLA), 134–155 (LIGP…KDKN), 178–200 (KALY…RKIT), 255–275 (KPFA…LSYS), and 291–312 (WFNN…ASQA). E367 provides a ligand contact to [CaMn4O5] cluster. The helical transmembrane segment at 447–471 (RARAAAAGFEKGIDRDTEPVLSMTP) threads the bilayer.

This sequence belongs to the PsbB/PsbC family. PsbC subfamily. As to quaternary structure, PSII is composed of 1 copy each of membrane proteins PsbA, PsbB, PsbC, PsbD, PsbE, PsbF, PsbH, PsbI, PsbJ, PsbK, PsbL, PsbM, PsbT, PsbX, PsbY, PsbZ, Psb30/Ycf12, at least 3 peripheral proteins of the oxygen-evolving complex and a large number of cofactors. It forms dimeric complexes. It depends on Binds multiple chlorophylls and provides some of the ligands for the Ca-4Mn-5O cluster of the oxygen-evolving complex. It may also provide a ligand for a Cl- that is required for oxygen evolution. PSII binds additional chlorophylls, carotenoids and specific lipids. as a cofactor.

It is found in the plastid. It localises to the chloroplast thylakoid membrane. Functionally, one of the components of the core complex of photosystem II (PSII). It binds chlorophyll and helps catalyze the primary light-induced photochemical processes of PSII. PSII is a light-driven water:plastoquinone oxidoreductase, using light energy to abstract electrons from H(2)O, generating O(2) and a proton gradient subsequently used for ATP formation. This Angiopteris evecta (Mule's foot fern) protein is Photosystem II CP43 reaction center protein.